Here is a 206-residue protein sequence, read N- to C-terminus: Shieldin complex subunit 1 (206 aa).

The disordered stretch occupies residues 27–94 (SSYEASQRVS…GQLETNEEED (68 aa)). Over residues 32–55 (SQRVSQGSSNSLSSLESHPFLSSS) the composition is skewed to low complexity. Residues 56 to 74 (TTDPDSNSLNTEQKGSWDS) are compositionally biased toward polar residues.

Component of the shieldin complex, consisting of SHLD1, SHLD2, SHLD3 and MAD2L2/REV7. Within the complex, SHLD2 forms a scaffold which interacts with a SHLD3-MAD2L2 subcomplex via its N-terminus, and with SHLD1 via its C-terminus. Interacts with ASTE1.

It localises to the chromosome. Component of the shieldin complex, which plays an important role in repair of DNA double-stranded breaks (DSBs). During G1 and S phase of the cell cycle, the complex functions downstream of TP53BP1 to promote non-homologous end joining (NHEJ) and suppress DNA end resection. Mediates various NHEJ-dependent processes including immunoglobulin class-switch recombination, and fusion of unprotected telomeres. This is Shieldin complex subunit 1 from Mus musculus (Mouse).